The primary structure comprises 266 residues: MFLVNSFLKGGGGGGGGGGGLGGGLGNVLGGLISGAGGGGGGGGGGGGGGGGGGTAMRILGGVISAISEAAAQYNPEPPPPRTHYSNIEANESEEVRQFRRLFAQLAGDDMEVSATELMNILNKVVTRHPDLKTDGFGIDTCRSMVAVMDSDTTGKLGFEEFKYLWNNIKKWQAIYKQFDVDRSGTIGSSELPGAFEAAGFHLNEHLYSMIIRRYSDEGGNMDFDNFISCLVRLDAMFRAFKSLDKDGTGQIQVNIQEWLQLTMYS.

Methionine 1 is modified (N-acetylmethionine). Serine 6 bears the Phosphoserine mark. The EF-hand 1; atypical domain occupies 94–128 (EEVRQFRRLFAQLAGDDMEVSATELMNILNKVVTR). Alanine 107, aspartate 110, glutamate 112, glutamate 117, aspartate 135, aspartate 150, aspartate 152, threonine 154, lysine 156, and glutamate 161 together coordinate Ca(2+). 4 consecutive EF-hand domains span residues 137-170 (FGID…NNIK), 167-202 (NNIK…AGFH), 203-231 (LNEH…ISCL), and 232-266 (VRLD…TMYS). Position 177 is an N6-acetyllysine (lysine 177). Ca(2+)-binding residues include aspartate 180, aspartate 182, serine 184, threonine 186, glutamate 191, and aspartate 223.

In terms of assembly, homodimer or heterodimer of a large (catalytic) and a small (regulatory) subunit. In presence of calcium, the heterodimer dissociates.

The protein localises to the cytoplasm. It is found in the cell membrane. In terms of biological role, regulatory subunit of the calcium-regulated non-lysosomal thiol-protease which catalyzes limited proteolysis of substrates involved in cytoskeletal remodeling and signal transduction. Essential for embryonic development. In Sus scrofa (Pig), this protein is Calpain small subunit 1 (CAPNS1).